An 855-amino-acid polypeptide reads, in one-letter code: MSEARRDSTSSLQRKKPPWLKLDIPSAAPPAAEEPSFLQPLRRQVFLRSVSMPAETAHISSPHCELRRPVLQRQTSITQTIRRGAADWFGVSKESESTQKWQRKSIRHCSQRYGKLKPQVLRELDLPSQDNVSLTSTETPPPLYVGPCQLGMQKIIDPLARGRAFRVADDAAEGLSAPHTPVTPGAASLCSFSSSRSGFHRLPRRRKRESVAKMSFRAAAALMKGRSVRDGTLRRAQRRSFTPASFLEEDTTDFPDELDTSFFAREGILHEELSTYPDEVFESPSEAALKDWEKAPEQADLTGGALDRSELERSHLMLPLERGWRKQKEGAAAPQPKVRLRQEVVSTAGPRRGQRIAVPVRKLFAREKRPYGLGMVGRLTNRTYRKRIDSFVKRQIEDMDDHRPFFTYWLTFVHSLVTVLAVCIYGIAPVGFSQHETVDSVLRNRGVYENVKYVQQENFWIGPSSEALIHLGAKFSPCMRQDPQVHSFIRAAREREKHSACCVRNDRSGCVQTSEEECSSTLAVWVKWPVHPSAPELAGHKRQFGSVCHQDPRVCDEPSSEDPHEWPEDITRWPICTKNSAGNHTNHPHMDCVITGRPCCIGTKGRCEITSREYCDFMRGYFHEEATLCSQVHCMDDVCGLLPFLNPEVPDQFYRLWLSLFLHAGILHCLVSICFQMTVLRDLEKLAGWHRIAIIYLLSGVTGNLASAIFLPYRAEVGPAGSQFGILACLFVELFQSWQILARPWRAFFKLLAVVLFLFTFGLLPWIDNFAHISGFISGLFLSFAFLPYISFGKFDLYRKRCQIIVFQVVFLGLLAGLVVLFYFYPVRCEWCEFLTCIPFTDKFCEKYELDAQLH.

Positions M1–S36 are disordered. Residues M1 to T411 are Cytoplasmic-facing. Residues P25 to S36 show a composition bias toward low complexity. Residues S76 and S176 each carry the phosphoserine modification. Phosphothreonine is present on residues T180 and T183. Position 390 is a phosphoserine (S390). The helical transmembrane segment at F412–F432 threads the bilayer. Residues S433 to R655 are Lumenal-facing. N583 carries an N-linked (GlcNAc...) asparagine glycan. A helical transmembrane segment spans residues L656–Q676. Topologically, residues M677 to R691 are cytoplasmic. The chain crosses the membrane as a helical span at residues I692–P712. Residues Y713–R714 are Lumenal-facing. A helical transmembrane segment spans residues A715–F735. The Cytoplasmic segment spans residues Q736–R746. Residues A747–I767 traverse the membrane as a helical segment. Over D768 to H772 the chain is Lumenal. A helical transmembrane segment spans residues I773–G793. Over K794–Q803 the chain is Cytoplasmic. Residues I804–F824 form a helical membrane-spanning segment. The Lumenal segment spans residues Y825 to H855.

It belongs to the peptidase S54 family. Homodimer, or homooligomer. Interacts with TGFA and HBEGF. Interacts with EGF; may retain EGF in the endoplasmic reticulum and regulates its degradation through the endoplasmic reticulum-associated degradation (ERAD). Interacts (via cytoplasmic N-terminus) with FRMD8/iTAP; this interaction leads to mutual protein stabilization. Interacts with ADAM17/TACE.

It localises to the endoplasmic reticulum membrane. The protein localises to the golgi apparatus membrane. Functionally, regulates ADAM17 protease, a sheddase of the epidermal growth factor (EGF) receptor ligands and TNF, thereby plays a role in sleep, cell survival, proliferation, migration and inflammation. Does not exhibit any protease activity on its own. In Plecturocebus moloch (Dusky titi monkey), this protein is Inactive rhomboid protein 1 (RHBDF1).